Reading from the N-terminus, the 109-residue chain is Enhancer of rudimentary homolog (109 aa).

Belongs to the E(R) family. In terms of assembly, homodimer.

Functionally, may have a role in the cell cycle. In Arabidopsis thaliana (Mouse-ear cress), this protein is Enhancer of rudimentary homolog.